The primary structure comprises 454 residues: Kynurenine 3-monooxygenase (454 aa).

It belongs to the aromatic-ring hydroxylase family. KMO subfamily. Requires FAD as cofactor.

The catalysed reaction is L-kynurenine + NADPH + O2 + H(+) = 3-hydroxy-L-kynurenine + NADP(+) + H2O. It functions in the pathway cofactor biosynthesis; NAD(+) biosynthesis; quinolinate from L-kynurenine: step 1/3. Catalyzes the hydroxylation of L-kynurenine (L-Kyn) to form 3-hydroxy-L-kynurenine (L-3OHKyn). Required for synthesis of quinolinic acid. This is Kynurenine 3-monooxygenase from Salinispora arenicola (strain CNS-205).